Consider the following 310-residue polypeptide: Ferredoxin--NADP reductase (310 aa).

The FAD site is built by D26, Q34, Y39, V78, F108, D268, and T308.

It belongs to the ferredoxin--NADP reductase type 2 family. As to quaternary structure, homodimer. It depends on FAD as a cofactor.

The catalysed reaction is 2 reduced [2Fe-2S]-[ferredoxin] + NADP(+) + H(+) = 2 oxidized [2Fe-2S]-[ferredoxin] + NADPH. This is Ferredoxin--NADP reductase from Lactobacillus helveticus (strain DPC 4571).